The sequence spans 401 residues: S-adenosylmethionine synthase (401 aa).

Histidine 16 provides a ligand contact to ATP. Aspartate 18 contributes to the Mg(2+) binding site. Glutamate 44 contributes to the K(+) binding site. Residues glutamate 57 and glutamine 100 each contribute to the L-methionine site. The flexible loop stretch occupies residues 100–110 (QSPDIAQGVNE). ATP-binding positions include 174–176 (DAK), 241–242 (RF), aspartate 250, 256–257 (RK), alanine 273, and lysine 277. Residue aspartate 250 participates in L-methionine binding. Lysine 281 is an L-methionine binding site.

Belongs to the AdoMet synthase family. Homotetramer; dimer of dimers. Mg(2+) serves as cofactor. The cofactor is K(+).

It is found in the cytoplasm. It catalyses the reaction L-methionine + ATP + H2O = S-adenosyl-L-methionine + phosphate + diphosphate. Its pathway is amino-acid biosynthesis; S-adenosyl-L-methionine biosynthesis; S-adenosyl-L-methionine from L-methionine: step 1/1. Catalyzes the formation of S-adenosylmethionine (AdoMet) from methionine and ATP. The overall synthetic reaction is composed of two sequential steps, AdoMet formation and the subsequent tripolyphosphate hydrolysis which occurs prior to release of AdoMet from the enzyme. The chain is S-adenosylmethionine synthase from Streptococcus equi subsp. zooepidemicus (strain MGCS10565).